Consider the following 1613-residue polypeptide: Reverse gyrase (1613 aa).

An RG N-terminal-type zinc finger spans residues 1–38; that stretch reads MIPMIYKEMCPNCNGEITSERLAIGVCEKCLKEENVFE. Zn(2+)-binding residues include C10, C13, C27, and C30. Residues Q83 and 100–107 each bind ATP; that span reads VPTGVGKS. Residues 87 to 291 enclose the Helicase ATP-binding domain; the sequence is AKRVLKNKSF…LYRELLDFEI (205 aa). The short motif at 203 to 206 is the DEAD box element; it reads DDVD. Residues 310 to 525 form the Helicase C-terminal domain; that stretch reads SKEKILEYIK…IDEVNLEELI (216 aa). Positions 546–1613 are topoisomerase I; sequence DLLKSVLMVV…ALHEEILSIR (1068 aa). The region spanning 550–712 is the Toprim domain; sequence SVLMVVESPN…NIYRVGFNEI (163 aa). Residues E556 and D681 each contribute to the Mg(2+) site. Residues 733 to 1613 form the Topo IA-type catalytic domain; the sequence is DENKVKGQVV…ALHEEILSIR (881 aa). Residues 1070-1199 enclose the DOD-type homing endonuclease domain; that stretch reads FAGLVLGDGS…IGIYLNSIGI (130 aa). Y1363 functions as the O-(5'-phospho-DNA)-tyrosine intermediate in the catalytic mechanism.

It in the N-terminal section; belongs to the DEAD box helicase family. DDVD subfamily. The protein in the C-terminal section; belongs to the type IA topoisomerase family. As to quaternary structure, monomer. Zn(2+) serves as cofactor. Requires Mg(2+) as cofactor. This protein undergoes a protein self splicing that involves a post-translational excision of the intervening region (intein) followed by peptide ligation.

It is found in the cytoplasm. It carries out the reaction ATP + H2O = ADP + phosphate + H(+). Functionally, modifies the topological state of DNA by introducing positive supercoils in an ATP-dependent process, increasing the linking number in steps of +1. Binds to single-stranded DNA, transiently cleaves and then rejoins the ends, introducing a positive supercoil in the process. The scissile phosphodiester is attacked by the catalytic tyrosine of the enzyme, resulting in the formation of a DNA-(5'-phosphotyrosyl)-enzyme intermediate. Probably involved in rewinding DNA strands in regions of the chromosome that have opened up to allow replication, transcription, DNA repair and/or for DNA protection. The sequence is that of Reverse gyrase from Methanocaldococcus jannaschii (strain ATCC 43067 / DSM 2661 / JAL-1 / JCM 10045 / NBRC 100440) (Methanococcus jannaschii).